A 127-amino-acid chain; its full sequence is Modulator protein MzrA (127 aa).

At 1 to 10 (MGLQNMTLRR) the chain is on the cytoplasmic side. Residues 11-31 (FTLSMSALLLLCALLWLWAAL) traverse the membrane as a helical segment. At 32–127 (EQQESSLAIR…RLRDAPHRLG (96 aa)) the chain is on the periplasmic side.

This sequence belongs to the MzrA family. In terms of assembly, interacts with EnvZ.

The protein resides in the cell inner membrane. Functionally, modulates the activity of the EnvZ/OmpR two-component regulatory system, probably by directly modulating EnvZ enzymatic activity and increasing stability of phosphorylated OmpR. The polypeptide is Modulator protein MzrA (Enterobacter lignolyticus (strain SCF1)).